A 948-amino-acid polypeptide reads, in one-letter code: ATPase 8, plasma membrane-type (948 aa).

At 1-64 (MATEFSWDEI…EKSENKFLKF (64 aa)) the chain is on the cytoplasmic side. A helical transmembrane segment spans residues 65 to 84 (LGFMWNPLSWVMESAAIMAI). Topologically, residues 85–96 (VLANGGGKAPDW) are extracellular. A helical transmembrane segment spans residues 97 to 117 (QDFIGIMVLLIINSTISFIEE). At 118–246 (NNAGNAAAAL…GHFQKVLTSI (129 aa)) the chain is on the cytoplasmic side. Residues 247–267 (GNFCICSIGLGMLIEILIMYP) form a helical membrane-spanning segment. Residues 268–276 (IQHRTYRDG) are Extracellular-facing. A helical membrane pass occupies residues 277-294 (IDNLLVLLIGGIPIAMPT). Topologically, residues 295–646 (VLSVTMAIGS…TSRAIFQRMK (352 aa)) are cytoplasmic. Asp332 acts as the 4-aspartylphosphate intermediate in catalysis. 2 residues coordinate Mg(2+): Asp591 and Asp595. The helical transmembrane segment at 647-668 (NYTIYAVSITIRIVLGFMLVAL) threads the bilayer. Residues 669-673 (IWRFD) lie on the Extracellular side of the membrane. Residues 674–696 (FAPFMVLIIAILNDGTIMTISKD) traverse the membrane as a helical segment. Over 697 to 712 (RVKPSPVPDSWKLNEI) the chain is Cytoplasmic. Residues 713-733 (FATGVVLGTYMALTTVLFFWL) form a helical membrane-spanning segment. At 734-754 (AHDTDFFSKTFGVRSIQGNEE) the chain is on the extracellular side. A helical transmembrane segment spans residues 755–775 (ELMAALYLQVSIISQALIFVT). Residues 776 to 787 (RSRSWSFVERPG) are Cytoplasmic-facing. A helical transmembrane segment spans residues 788–808 (FLLLIAFVIAQLVATLIAVYA). The Extracellular portion of the chain corresponds to 809-816 (NWGFARIV). The chain crosses the membrane as a helical span at residues 817–837 (GCGWGWAGGIWVYSIITYIPL). Residues 838–948 (DILKFIIRYA…IDTIQQHYTV (111 aa)) are Cytoplasmic-facing. Thr884 carries the phosphothreonine modification. Residue Ser930 is modified to Phosphoserine. The tract at residues 946–948 (YTV) is interaction with 14-3-3 proteins. A Phosphothreonine modification is found at Thr947.

The protein belongs to the cation transport ATPase (P-type) (TC 3.A.3) family. Type IIIA subfamily. In terms of assembly, binds to 14-3-3 proteins. The binding is induced by phosphorylation of Thr-947. Binding to 14-3-3 proteins activates the H(+)-ATPase. In terms of tissue distribution, expressed in guard cells, roots and leaves, and barely in mesophyll cells.

It is found in the membrane. It carries out the reaction ATP + H2O + H(+)(in) = ADP + phosphate + 2 H(+)(out). Its function is as follows. The plasma membrane H(+) ATPase of plants and fungi generates a proton gradient that drives the active transport of nutrients by H(+)-symport. The resulting external acidification and/or internal alkinization may mediate growth responses. In Arabidopsis thaliana (Mouse-ear cress), this protein is ATPase 8, plasma membrane-type (AHA8).